A 406-amino-acid chain; its full sequence is Argininosuccinate synthase (406 aa).

ATP-binding positions include 12-20 and A39; that span reads AYSGGLDTS. Positions 90 and 95 each coordinate L-citrulline. G120 serves as a coordination point for ATP. L-aspartate is bound by residues T122, N126, and D127. N126 lines the L-citrulline pocket. Residues R130, S179, S188, E264, and Y276 each coordinate L-citrulline.

The protein belongs to the argininosuccinate synthase family. Type 1 subfamily. Homotetramer.

The protein resides in the cytoplasm. The catalysed reaction is L-citrulline + L-aspartate + ATP = 2-(N(omega)-L-arginino)succinate + AMP + diphosphate + H(+). The protein operates within amino-acid biosynthesis; L-arginine biosynthesis; L-arginine from L-ornithine and carbamoyl phosphate: step 2/3. The chain is Argininosuccinate synthase from Citrifermentans bemidjiense (strain ATCC BAA-1014 / DSM 16622 / JCM 12645 / Bem) (Geobacter bemidjiensis).